The primary structure comprises 755 residues: MAEQWDLDEECLRRLGALTLEQPELVESLSLQGSYAGKIHSIGDAFRNFKSLRSLDLSRNLITSLKGIQYLCSLQELNLYYNNIPSLVEVSRLQPLPFLKELDLRLNPVVRKDTDYRLFAVYTLQTLEKLDDRAVRDSERRAAKLHFSQLGNSENFLLEVEKSSREKTMKNCVTDEGPASHVSPEVDARMETDANKGLFIPFPNREIKDSLTSICAAQGSGTPAQKLDVFPLGTQMQEATRRETSDLHQEDELRLYPPPQSTVRSPEKMTRDGYRVSFLDTKSSGSSPEKDLIPKPDAYPCTHDASLGKRLDVGDSNQILPCQLPSEVCLDHYGNQYSQTLCLHGSLVKRAQKGKNYREHSIKPSQDKKATTSHPCGDLLTSLSNPDSSTGRLLRLSSDLYATTHFNSDPALLANVEQQLSSLRDFTPAPGSFPSSPALGNSLRTLLLPPGTPENREIPTKRSLSPSRRGFKRKDGILANPSLKRGFQDATGSEAQPLSSDLGSLHGLSGNHSPPISARTPHVATVLRQLLELVDKHWNGSGSLLLDKKFLGPARDLLLSLVVPAPSQQWRRSKLDDKAGKALCWRETELKEAGLLVPNDVESLKQKLVKVLEENLVLSEKIQQLEGTAATSIVSGHPSHTHDELLRKNQQLTIQVACLTQELTQLKRLEETVALLHESQRSLVVTNEYLLQQLHKEQKGYSGKSLLPPEKSHPLGRSSPFGKSTLSSSSPMVHDTGQYLIQSVSEADPEPSLWS.

LRR repeat units follow at residues 51–72 and 73–94; these read SLRS…QYLC and SLQE…SRLQ. Residues 107 to 146 enclose the LRRCT domain; it reads NPVVRKDTDYRLFAVYTLQTLEKLDDRAVRDSERRAAKLH. Disordered regions lie at residues 354 to 374 and 448 to 517; these read GKNY…TTSH and LPPG…PPIS. Basic and acidic residues predominate over residues 356-370; that stretch reads NYREHSIKPSQDKKA. Low complexity predominate over residues 498–510; the sequence is LSSDLGSLHGLSG. Residues 601 to 671 adopt a coiled-coil conformation; that stretch reads VESLKQKLVK…ELTQLKRLEE (71 aa). Positions 701-755 are disordered; that stretch reads YSGKSLLPPEKSHPLGRSSPFGKSTLSSSSPMVHDTGQYLIQSVSEADPEPSLWS. A compositionally biased stretch (polar residues) spans 721–731; that stretch reads FGKSTLSSSSP.

This chain is Leucine-rich repeat-containing protein 36 (Lrrc36), found in Mus musculus (Mouse).